The following is a 490-amino-acid chain: Probable glycine dehydrogenase (decarboxylating) subunit 2 (490 aa).

Lys-273 carries the post-translational modification N6-(pyridoxal phosphate)lysine.

The protein belongs to the GcvP family. C-terminal subunit subfamily. In terms of assembly, the glycine cleavage system is composed of four proteins: P, T, L and H. In this organism, the P 'protein' is a heterodimer of two subunits. The cofactor is pyridoxal 5'-phosphate.

It catalyses the reaction N(6)-[(R)-lipoyl]-L-lysyl-[glycine-cleavage complex H protein] + glycine + H(+) = N(6)-[(R)-S(8)-aminomethyldihydrolipoyl]-L-lysyl-[glycine-cleavage complex H protein] + CO2. Functionally, the glycine cleavage system catalyzes the degradation of glycine. The P protein binds the alpha-amino group of glycine through its pyridoxal phosphate cofactor; CO(2) is released and the remaining methylamine moiety is then transferred to the lipoamide cofactor of the H protein. In Staphylococcus aureus (strain Newman), this protein is Probable glycine dehydrogenase (decarboxylating) subunit 2.